Here is a 90-residue protein sequence, read N- to C-terminus: Putative defensin-like protein 243 (90 aa).

The signal sequence occupies residues 1-19; sequence MKVEVIFLASCVLFSLIHA. 4 disulfides stabilise this stretch: C33–C88, C43–C72, C53–C82, and C70–C84.

This sequence belongs to the DEFL family.

The protein resides in the secreted. The chain is Putative defensin-like protein 243 (SCRL9) from Arabidopsis thaliana (Mouse-ear cress).